A 345-amino-acid chain; its full sequence is NADPH dehydrogenase (345 aa).

Residue 23–26 coordinates FMN; sequence SPMC. Y28 is a binding site for substrate. 2 residues coordinate FMN: A60 and Q102. 164 to 167 contacts substrate; the sequence is HGAH. Residues R215 and 307–308 contribute to the FMN site; that span reads GR.

The protein belongs to the NADH:flavin oxidoreductase/NADH oxidase family. NamA subfamily. Homotetramer. FMN is required as a cofactor.

It carries out the reaction A + NADPH + H(+) = AH2 + NADP(+). Catalyzes the reduction of the double bond of an array of alpha,beta-unsaturated aldehydes and ketones. It also reduces the nitro group of nitroester and nitroaromatic compounds. It could have a role in detoxification processes. This chain is NADPH dehydrogenase, found in Bacillus cereus (strain ZK / E33L).